A 434-amino-acid chain; its full sequence is dTDP-D-glucose 4,6-dehydratase (434 aa).

Thr-134 provides a ligand contact to substrate. Residue Asp-135 is the Proton donor of the active site. Catalysis depends on proton acceptor residues Glu-136 and Tyr-169. The segment covering 286–309 (NNNNNNNNNNNNNNNNNNNNNNNN) has biased composition (low complexity). Residues 286-310 (NNNNNNNNNNNNNNNNNNNNNNNND) are disordered.

Belongs to the NAD(P)-dependent epimerase/dehydratase family. dTDP-glucose dehydratase subfamily. Requires NAD(+) as cofactor.

The enzyme catalyses dTDP-alpha-D-glucose = dTDP-4-dehydro-6-deoxy-alpha-D-glucose + H2O. The polypeptide is dTDP-D-glucose 4,6-dehydratase (tgds) (Dictyostelium discoideum (Social amoeba)).